The chain runs to 262 residues: MNDILAKILAVKAEEVATARQMRSEAELLREAQARQDVRGFAQAIEDKIAQGKPGVIAEIKKASPSKGVLRENFDASEIAASYAAHGAACLSVLTDVQFFQGSHDNLRRARAACPLPVLRKDFILDPYQIISARAMGADCVLLIVAALSPTQLRDLEAVAMDLGMDVLVEVHDEAELDVALGMKTPLLGINNRNLRSFETRLETTLNLLPRIPAGKRVVTESGILQPDDVQLMRRHGVQAFLVGEAFMRAEEPGAELARLVA.

The protein belongs to the TrpC family.

It carries out the reaction 1-(2-carboxyphenylamino)-1-deoxy-D-ribulose 5-phosphate + H(+) = (1S,2R)-1-C-(indol-3-yl)glycerol 3-phosphate + CO2 + H2O. It functions in the pathway amino-acid biosynthesis; L-tryptophan biosynthesis; L-tryptophan from chorismate: step 4/5. In Bordetella avium (strain 197N), this protein is Indole-3-glycerol phosphate synthase.